We begin with the raw amino-acid sequence, 720 residues long: Nucleoporin NUP2 (720 aa).

A disordered region spans residues Met1–Ser33. Ser17 and Ser20 each carry phosphoserine. Positions Val35–Phe50 are interaction with SRP1 NLS binding site 1. Disordered stretches follow at residues Pro52–Arg92 and Lys136–Asn278. The stretch at Phe67 to Phe69 is one FXF 1 repeat. Residues Val81–Arg92 show a composition bias toward polar residues. At Ser137 the chain carries Phosphoserine. Over residues Asn147–Lys159 the composition is skewed to basic and acidic residues. A Phosphoserine modification is found at Ser165. Residues Phe189 to Gly192 form an FXFG 1 repeat. Residues Pro193–Glu202 show a composition bias toward basic and acidic residues. Residues Ser203 and Ser205 each carry the phosphoserine modification. 2 FXF repeats span residues Phe216–Phe218 and Phe247–Phe249. Residues Asn243 to Asn278 show a composition bias toward polar residues. FXFG repeat units follow at residues Phe285–Gly288, Phe302–Gly305, and Phe318–Gly321. The span at Lys315–Thr324 shows a compositional bias: polar residues. Residues Lys315–Glu604 form a disordered region. Residues Ser345 to Asn360 are compositionally biased toward low complexity. Phosphoserine is present on residues Ser348 and Ser351. Residues Phe352–Phe354 form an FXF 4 repeat. Thr361 carries the post-translational modification Phosphothreonine. One copy of the FXFG 5 repeat lies at Phe369–Gly372. Positions Val373–Pro384 are enriched in polar residues. Residues Phe386–Gly389 form an FXFG 6 repeat. A compositionally biased stretch (basic and acidic residues) spans Thr424 to Lys435. 5 FXFG repeats span residues Phe438–Gly441, Phe474–Gly477, Phe493–Gly496, Phe511–Gly514, and Phe524–Gly527. The span at Asn479–Phe495 shows a compositional bias: low complexity. Polar residues predominate over residues Phe513–Leu533. Low complexity predominate over residues Pro534–Thr548. One copy of the FXF 5 repeat lies at Phe550–Phe552. Residues Thr574 to Ala584 show a composition bias toward polar residues. Ser581 carries the phosphoserine modification. The region spanning Asp583–Lys720 is the RanBD1 domain. Residue Thr590 is modified to Phosphothreonine.

In terms of assembly, component of the nuclear pore complex (NPC). NPC constitutes the exclusive means of nucleocytoplasmic transport. NPCs allow the passive diffusion of ions and small molecules and the active, nuclear transport receptor-mediated bidirectional transport of macromolecules such as proteins, RNAs, ribonucleoparticles (RNPs), and ribosomal subunits across the nuclear envelope. Due to its 8-fold rotational symmetry, all subunits are present with 8 copies or multiples thereof. Binds to the nuclear basket of the NPC through NUP60 in a (GSP1, GSP2) GTPase-GTP-dependent manner. Interacts through its FG repeats with nuclear transport factors. Interacts with KAP122.

Its subcellular location is the nucleus. It localises to the nuclear pore complex. The protein localises to the nucleus membrane. In terms of biological role, functions as a component of the nuclear pore complex (NPC). NPC components, collectively referred to as nucleoporins (NUPs), can play the role of both NPC structural components and of docking or interaction partners for transiently associated nuclear transport factors. Active directional transport is assured by both, a Phe-Gly (FG) repeat affinity gradient for these transport factors across the NPC and a transport cofactor concentration gradient across the nuclear envelope (GSP1 and GSP2 GTPases associated predominantly with GTP in the nucleus, with GDP in the cytoplasm). As one of the FG repeat nucleoporins NUP2 is involved in interactions with and guidance of nuclear transport receptors such as SRP1-KAP95 (importin alpha and beta) through the NPC. Like the closely related NUP1 it also plays an important role in disassembling and recycling SRP1-KAP95 to the cytoplasm after nuclear import. Upon entry of the heterotrimeric SRP1-KAP95-cargo complex in the nucleus, NUP2 binds through its N-terminus to the SRP1 nuclear localization signal (NLS) binding site, thus accelerating the release of the NLS-cargo. SRP1 in turn is released from NUP2 by binding of the GSP1-GTP associated export factor CSE1. NUP2 may also have a chromatin boundary/insulator activity through indirect interaction with genomic DNA via CSE1 and blocking of heterochromatin spreading. This Saccharomyces cerevisiae (strain ATCC 204508 / S288c) (Baker's yeast) protein is Nucleoporin NUP2 (NUP2).